Reading from the N-terminus, the 334-residue chain is Ribosomal RNA small subunit methyltransferase H (334 aa).

Residues 53 to 55 (GGH), D72, F99, D122, and H129 contribute to the S-adenosyl-L-methionine site.

It belongs to the methyltransferase superfamily. RsmH family.

The protein resides in the cytoplasm. The catalysed reaction is cytidine(1402) in 16S rRNA + S-adenosyl-L-methionine = N(4)-methylcytidine(1402) in 16S rRNA + S-adenosyl-L-homocysteine + H(+). Functionally, specifically methylates the N4 position of cytidine in position 1402 (C1402) of 16S rRNA. This chain is Ribosomal RNA small subunit methyltransferase H, found in Leptospira interrogans serogroup Icterohaemorrhagiae serovar Lai (strain 56601).